Here is a 369-residue protein sequence, read N- to C-terminus: MADHYEVLGVERNATPDEIKKAYRRLARELHPDVNPSTEAQERFKLVTHAYDVLSDPQQRQQYDRGGASGFGGGGGADFSGFGDIFETFFGGGGASRGPRSRRERGQDALLRVEVDLDEVVFGAHRDLEVDTAIVCETCDGSCCQPGTAPVPCDICHGTGSIQRSVRSLLGNVMTSSPCGSCRGYGTVIATPCVTCQGQGRVRARRTVPVDIPAGVDTGLRLQMPGSGEAGPAGGPNGDLYLEIKVKHHDVFSRDGDDLLCTLEVSMADAILGAAATIKALDGDIRLELKPGTQSADIVSVKDRGITHLRCSGRGDLRVGIQVVTPTKLDHREKELIKKFAESHKASEPSLARFQQGLFAKLRDRFLNV.

In terms of domain architecture, J spans 3–67; that stretch reads DHYEVLGVER…QQRQQYDRGG (65 aa). A CR-type zinc finger spans residues 123 to 205; that stretch reads GAHRDLEVDT…CQGQGRVRAR (83 aa). Zn(2+) is bound by residues Cys136, Cys139, Cys153, Cys156, Cys179, Cys182, Cys193, and Cys196. 4 CXXCXGXG motif repeats span residues 136–143, 153–160, 179–186, and 193–200; these read CETCDGSC, CDICHGTG, CGSCRGYG, and CVTCQGQG.

This sequence belongs to the DnaJ family. As to quaternary structure, homodimer. Zn(2+) is required as a cofactor.

It is found in the cytoplasm. Functionally, participates actively in the response to hyperosmotic and heat shock by preventing the aggregation of stress-denatured proteins and by disaggregating proteins, also in an autonomous, DnaK-independent fashion. Unfolded proteins bind initially to DnaJ; upon interaction with the DnaJ-bound protein, DnaK hydrolyzes its bound ATP, resulting in the formation of a stable complex. GrpE releases ADP from DnaK; ATP binding to DnaK triggers the release of the substrate protein, thus completing the reaction cycle. Several rounds of ATP-dependent interactions between DnaJ, DnaK and GrpE are required for fully efficient folding. Also involved, together with DnaK and GrpE, in the DNA replication of plasmids through activation of initiation proteins. The polypeptide is Chaperone protein DnaJ (Leifsonia xyli subsp. xyli (strain CTCB07)).